We begin with the raw amino-acid sequence, 621 residues long: Putative acyltransferase plsB1 (621 aa).

The HXXXXD motif signature appears at 123–128 (HRSYLD).

It belongs to the GPAT/DAPAT family.

The protein resides in the cell membrane. The protein is Putative acyltransferase plsB1 (plsB1) of Mycobacterium bovis (strain ATCC BAA-935 / AF2122/97).